The primary structure comprises 246 residues: tRNA (guanine-N(7)-)-methyltransferase (246 aa).

The disordered stretch occupies residues 1–26 (MSDSSSSSENAPATPESPGRPPRGIK). The S-adenosyl-L-methionine site is built by Glu-74, Glu-99, Asp-126, and Asp-149. Asp-149 is a catalytic residue. Substrate-binding positions include Lys-153, Asp-185, and 224–227 (TKFE).

This sequence belongs to the class I-like SAM-binding methyltransferase superfamily. TrmB family.

It catalyses the reaction guanosine(46) in tRNA + S-adenosyl-L-methionine = N(7)-methylguanosine(46) in tRNA + S-adenosyl-L-homocysteine. Its pathway is tRNA modification; N(7)-methylguanine-tRNA biosynthesis. Catalyzes the formation of N(7)-methylguanine at position 46 (m7G46) in tRNA. This is tRNA (guanine-N(7)-)-methyltransferase from Chromohalobacter salexigens (strain ATCC BAA-138 / DSM 3043 / CIP 106854 / NCIMB 13768 / 1H11).